A 151-amino-acid chain; its full sequence is Homeobox protein HD-1 (151 aa).

Residues 87 to 146 (ESIKSRRFPKFITEALERSFEIDQYPSEAEKARLAKICKLSTKQINNWFTNKRNRTKGHE) constitute a DNA-binding region (homeobox).

The protein localises to the nucleus. The polypeptide is Homeobox protein HD-1 (HD-1) (Encephalitozoon cuniculi (strain GB-M1) (Microsporidian parasite)).